The following is a 519-amino-acid chain: Cytochrome P450 CYP99A1 (519 aa).

Residue Cys453 coordinates heme.

The protein belongs to the cytochrome P450 family. It depends on heme as a cofactor.

The protein resides in the membrane. The polypeptide is Cytochrome P450 CYP99A1 (CYP99A1) (Sorghum bicolor (Sorghum)).